Reading from the N-terminus, the 240-residue chain is uncharacterized protein (240 aa).

A C2H2-type zinc finger spans residues Leu-3 to His-27. 2 disordered regions span residues His-21–Glu-43 and Ala-120–Ile-171. Basic and acidic residues predominate over residues Ala-120 to Lys-136. Over residues Ser-155 to Ser-166 the composition is skewed to low complexity.

This is an uncharacterized protein from Schizosaccharomyces pombe (strain 972 / ATCC 24843) (Fission yeast).